A 338-amino-acid polypeptide reads, in one-letter code: DNA-directed RNA polymerase subunit alpha (338 aa).

The segment at M1–N225 is alpha N-terminal domain (alpha-NTD). Positions Y242–E338 are alpha C-terminal domain (alpha-CTD). A disordered region spans residues L319–E338.

It belongs to the RNA polymerase alpha chain family. In terms of assembly, homodimer. The RNAP catalytic core consists of 2 alpha, 1 beta, 1 beta' and 1 omega subunit. When a sigma factor is associated with the core the holoenzyme is formed, which can initiate transcription.

It carries out the reaction RNA(n) + a ribonucleoside 5'-triphosphate = RNA(n+1) + diphosphate. In terms of biological role, DNA-dependent RNA polymerase catalyzes the transcription of DNA into RNA using the four ribonucleoside triphosphates as substrates. In Corynebacterium glutamicum (strain ATCC 13032 / DSM 20300 / JCM 1318 / BCRC 11384 / CCUG 27702 / LMG 3730 / NBRC 12168 / NCIMB 10025 / NRRL B-2784 / 534), this protein is DNA-directed RNA polymerase subunit alpha.